The primary structure comprises 89 residues: uncharacterized protein (89 aa).

Residue Met1 is a topological domain, cytoplasmic. A helical membrane pass occupies residues 2–22; sequence LFEIIYIVSSLFYIVSIIYTL. At 23-89 the chain is on the extracellular side; that stretch reads MRIKHINTVA…ELKKSKLCEG (67 aa).

It localises to the host membrane. This is an uncharacterized protein from Sulfolobus islandicus filamentous virus (isolate Iceland/Hveragerdi) (SIFV).